Here is a 916-residue protein sequence, read N- to C-terminus: Chitin synthase B (916 aa).

Disordered regions lie at residues 1-75 and 118-141; these read MAYH…GYSL and ARSETSSTEAWRQRQAGAAGGGNG. The segment covering 14–26 has biased composition (basic and acidic residues); it reads HTYDDGHQLRDLS. Residues 59–75 show a composition bias toward polar residues; the sequence is RGLTASPVQRPTSGYSL. 7 consecutive transmembrane segments (helical) span residues 544 to 561, 588 to 608, 629 to 649, 664 to 684, 716 to 736, 845 to 865, and 884 to 904; these read RWLNGSFAAGIYSLMHFG, FLTWFSLASYWLTTSVIMDLV, IINTLVKYIYLAFLLLQFILA, SFVAFGIIQLYVVVDALYLVV, IIIIALAATFGLYFVASFMYL, LVTLWLFSNGLLAVCITSEGL, and ALLWSNAVVALIRFIGATWFL.

Belongs to the chitin synthase family. Class III subfamily. In terms of assembly, interacts with kibesin kinA. In terms of processing, activity requires trypsin activation, suggesting a zymogenic nature. Phosphorylated at yet unidentified residues in a N-terminal disordered region-dependent manner.

It is found in the cell membrane. The protein localises to the cell tip. Its subcellular location is the cell septum. The enzyme catalyses [(1-&gt;4)-N-acetyl-beta-D-glucosaminyl](n) + UDP-N-acetyl-alpha-D-glucosamine = [(1-&gt;4)-N-acetyl-beta-D-glucosaminyl](n+1) + UDP + H(+). Its activity is regulated as follows. Activity is stimulated by Mg(2+) and is inhibited by polyoxin D. Its function is as follows. Polymerizes chitin, a structural polymer of the cell wall and septum, by transferring the sugar moiety of UDP-GlcNAc to the non-reducing end of the growing chitin polymer. Does not substantially contribute to the rigidity of the cell wall but is necessary for normal hyphal growth and organization. In addition to its functions in the formation of normal cell walls of hyphae, is also involved in conidiophore and conidia development. The chain is Chitin synthase B from Emericella nidulans (strain FGSC A4 / ATCC 38163 / CBS 112.46 / NRRL 194 / M139) (Aspergillus nidulans).